We begin with the raw amino-acid sequence, 32 residues long: Delta-conotoxin-like CnVIC (32 aa).

3 disulfides stabilise this stretch: C3–C18, C10–C22, and C17–C27. 2 positions are modified to 4-hydroxyproline: P6 and P14.

The protein belongs to the conotoxin O1 superfamily. Expressed by the venom duct.

The protein localises to the secreted. Functionally, delta-conotoxins bind to site 6 of voltage-gated sodium channels (Nav) and inhibit the inactivation process. This toxin acts on Nav1.2/SCN2A, Nav1.4/SCN4A, Nav1.5/SCN5A (weak activity), Nav1.6/SCN8A (EC(50)=2.5 uM). This is Delta-conotoxin-like CnVIC from Conus consors (Singed cone).